We begin with the raw amino-acid sequence, 365 residues long: Chorismate synthase (365 aa).

Arg-46 serves as a coordination point for NADP(+). Residues 123-125, 241-242, Gly-281, 296-300, and Arg-322 contribute to the FMN site; these read RSS, NG, and KPTPS.

It belongs to the chorismate synthase family. In terms of assembly, homotetramer. FMNH2 serves as cofactor.

It carries out the reaction 5-O-(1-carboxyvinyl)-3-phosphoshikimate = chorismate + phosphate. The protein operates within metabolic intermediate biosynthesis; chorismate biosynthesis; chorismate from D-erythrose 4-phosphate and phosphoenolpyruvate: step 7/7. In terms of biological role, catalyzes the anti-1,4-elimination of the C-3 phosphate and the C-6 proR hydrogen from 5-enolpyruvylshikimate-3-phosphate (EPSP) to yield chorismate, which is the branch point compound that serves as the starting substrate for the three terminal pathways of aromatic amino acid biosynthesis. This reaction introduces a second double bond into the aromatic ring system. The protein is Chorismate synthase of Helicobacter pylori (strain G27).